The following is a 218-amino-acid chain: tRNA (guanine-N(7)-)-methyltransferase (218 aa).

The S-adenosyl-L-methionine site is built by Glu43, Asp68, Glu101, and Asn124. Residues Lys128 and Asp160 each contribute to the substrate site.

This sequence belongs to the class I-like SAM-binding methyltransferase superfamily. TrmB family.

It carries out the reaction guanosine(46) in tRNA + S-adenosyl-L-methionine = N(7)-methylguanosine(46) in tRNA + S-adenosyl-L-homocysteine. It participates in tRNA modification; N(7)-methylguanine-tRNA biosynthesis. Functionally, catalyzes the formation of N(7)-methylguanine at position 46 (m7G46) in tRNA. The sequence is that of tRNA (guanine-N(7)-)-methyltransferase from Acetivibrio thermocellus (strain ATCC 27405 / DSM 1237 / JCM 9322 / NBRC 103400 / NCIMB 10682 / NRRL B-4536 / VPI 7372) (Clostridium thermocellum).